Here is a 611-residue protein sequence, read N- to C-terminus: Putative pentatricopeptide repeat-containing protein At1g56570 (611 aa).

PPR repeat units lie at residues 44 to 74, 75 to 109, 110 to 144, 145 to 176, 177 to 211, 212 to 246, 247 to 281, 282 to 311, 312 to 346, 347 to 377, 379 to 413, 414 to 444, and 450 to 480; these read HHILATNLIVSYFEKGLVEEARSLFDEMPDR, DVVAWTAMITGYASSNYNARAWECFHEMVKQGTSP, NEFTLSSVLKSCRNMKVLAYGALVHGVVVKLGMEG, SLYVDNAMMNMYATCSVTMEAACLIFRDIKVK, NDVTWTTLITGFTHLGDGIGGLKMYKQMLLENAEV, TPYCITIAVRASASIDSVTTGKQIHASVIKRGFQS, NLPVMNSILDLYCRCGYLSEAKHYFHEMEDKDLIT, WNTLISELERSDSSEALLMFQRFESQGFVP, NCYTFTSLVAACANIAALNCGQQLHGRIFRRGFNK, NVELANALIDMYAKCGNIPDSQRVFGEIVDR, NLVSWTSMMIGYGSHGYGAEAVELFDKMVSSGIRP, DRIVFMAVLSACRHAGLVEKGLKYFNVMESE, and DRDIYNCVVDLLGRAGKIGEAYELVERMPFK. Residues 485–561 form a type E motif region; sequence TWGAILGACK…EAGMSWILVE (77 aa). Residues 562–592 form a type E(+) motif region; that stretch reads NQVFSFAVSDKMCPNASSVYSVLGLLIEETR.

The protein belongs to the PPR family. PCMP-E subfamily.

The polypeptide is Putative pentatricopeptide repeat-containing protein At1g56570 (PCMP-E64) (Arabidopsis thaliana (Mouse-ear cress)).